A 482-amino-acid chain; its full sequence is tRNA sulfurtransferase (482 aa).

A THUMP domain is found at 61–165; the sequence is LAIRDALTRI…DDRLLLIKGR (105 aa). ATP-binding positions include 183 to 184, Lys265, Gly287, and Gln296; that span reads LI. Cys344 and Cys456 are oxidised to a cystine. A Rhodanese domain is found at 404–482; the sequence is FGPNDVILDI…GFNNVKVYRP (79 aa). Catalysis depends on Cys456, which acts as the Cysteine persulfide intermediate.

The protein belongs to the ThiI family.

Its subcellular location is the cytoplasm. It catalyses the reaction [ThiI sulfur-carrier protein]-S-sulfanyl-L-cysteine + a uridine in tRNA + 2 reduced [2Fe-2S]-[ferredoxin] + ATP + H(+) = [ThiI sulfur-carrier protein]-L-cysteine + a 4-thiouridine in tRNA + 2 oxidized [2Fe-2S]-[ferredoxin] + AMP + diphosphate. The catalysed reaction is [ThiS sulfur-carrier protein]-C-terminal Gly-Gly-AMP + S-sulfanyl-L-cysteinyl-[cysteine desulfurase] + AH2 = [ThiS sulfur-carrier protein]-C-terminal-Gly-aminoethanethioate + L-cysteinyl-[cysteine desulfurase] + A + AMP + 2 H(+). Its pathway is cofactor biosynthesis; thiamine diphosphate biosynthesis. Catalyzes the ATP-dependent transfer of a sulfur to tRNA to produce 4-thiouridine in position 8 of tRNAs, which functions as a near-UV photosensor. Also catalyzes the transfer of sulfur to the sulfur carrier protein ThiS, forming ThiS-thiocarboxylate. This is a step in the synthesis of thiazole, in the thiamine biosynthesis pathway. The sulfur is donated as persulfide by IscS. This is tRNA sulfurtransferase from Escherichia coli (strain ATCC 8739 / DSM 1576 / NBRC 3972 / NCIMB 8545 / WDCM 00012 / Crooks).